The following is a 294-amino-acid chain: Elongation factor Ts (294 aa).

The involved in Mg(2+) ion dislocation from EF-Tu stretch occupies residues T79–V82.

Belongs to the EF-Ts family.

The protein resides in the cytoplasm. Associates with the EF-Tu.GDP complex and induces the exchange of GDP to GTP. It remains bound to the aminoacyl-tRNA.EF-Tu.GTP complex up to the GTP hydrolysis stage on the ribosome. This is Elongation factor Ts from Geobacillus sp. (strain WCH70).